Consider the following 418-residue polypeptide: Tyrosine--tRNA ligase (418 aa).

Tyrosine 38 is a binding site for L-tyrosine. The 'HIGH' region signature appears at 43-52 (CTAKSLHVGS). Residues tyrosine 175 and glutamine 179 each contribute to the L-tyrosine site. The 'KMSKS' region motif lies at 235 to 239 (KMGKT). Position 238 (lysine 238) interacts with ATP. The 66-residue stretch at 348–413 (LPIIKLLQMC…CGKKRHLKVM (66 aa)) folds into the S4 RNA-binding domain.

It belongs to the class-I aminoacyl-tRNA synthetase family. TyrS type 1 subfamily. In terms of assembly, homodimer.

It is found in the cytoplasm. It carries out the reaction tRNA(Tyr) + L-tyrosine + ATP = L-tyrosyl-tRNA(Tyr) + AMP + diphosphate + H(+). Catalyzes the attachment of tyrosine to tRNA(Tyr) in a two-step reaction: tyrosine is first activated by ATP to form Tyr-AMP and then transferred to the acceptor end of tRNA(Tyr). This is Tyrosine--tRNA ligase from Ehrlichia chaffeensis (strain ATCC CRL-10679 / Arkansas).